Here is a 449-residue protein sequence, read N- to C-terminus: Tubulin alpha-8 chain (449 aa).

Positions 1–4 (MREC) match the MREC motif motif. GTP contacts are provided by Gln11, Glu71, Ser140, Gly144, Thr145, Thr179, Asn206, and Asn228. Residue Glu71 coordinates Mg(2+). Glu254 is a catalytic residue.

It belongs to the tubulin family. Dimer of alpha and beta chains. A typical microtubule is a hollow water-filled tube with an outer diameter of 25 nm and an inner diameter of 15 nM. Alpha-beta heterodimers associate head-to-tail to form protofilaments running lengthwise along the microtubule wall with the beta-tubulin subunit facing the microtubule plus end conferring a structural polarity. Microtubules usually have 13 protofilaments but different protofilament numbers can be found in some organisms and specialized cells. It depends on Mg(2+) as a cofactor. In terms of processing, some glutamate residues at the C-terminus are polyglycylated, resulting in polyglycine chains on the gamma-carboxyl group. Glycylation is mainly limited to tubulin incorporated into axonemes (cilia and flagella) whereas glutamylation is prevalent in neuronal cells, centrioles, axonemes, and the mitotic spindle. Both modifications can coexist on the same protein on adjacent residues, and lowering polyglycylation levels increases polyglutamylation, and reciprocally. Cilia and flagella glycylation is required for their stability and maintenance. Flagella glycylation controls sperm motility. Post-translationally, some glutamate residues at the C-terminus are polyglutamylated, resulting in polyglutamate chains on the gamma-carboxyl group. Polyglutamylation plays a key role in microtubule severing by spastin (SPAST). SPAST preferentially recognizes and acts on microtubules decorated with short polyglutamate tails: severing activity by SPAST increases as the number of glutamates per tubulin rises from one to eight, but decreases beyond this glutamylation threshold. Glutamylation is also involved in cilia motility. The C-terminal phenylalanine residue is cleaved by MATCAP1/KIAA0895L. Expressed at highest levels in the testis, followed by skeletal and heart muscle. Expressed at low levels in the developing brain.

It localises to the cytoplasm. It is found in the cytoskeleton. The catalysed reaction is GTP + H2O = GDP + phosphate + H(+). Tubulin is the major constituent of microtubules, a cylinder consisting of laterally associated linear protofilaments composed of alpha- and beta-tubulin heterodimers. Microtubules grow by the addition of GTP-tubulin dimers to the microtubule end, where a stabilizing cap forms. Below the cap, tubulin dimers are in GDP-bound state, owing to GTPase activity of alpha-tubulin. This Mus musculus (Mouse) protein is Tubulin alpha-8 chain (Tuba8).